A 147-amino-acid polypeptide reads, in one-letter code: Spermidine export protein MdtJ (147 aa).

A run of 4 helical transmembrane segments spans residues 1–21 (MIYW…TLSM), 31–51 (TGHV…SLAV), 54–74 (VALG…ITIF), and 81–101 (ETLS…ILLV). A compositionally biased stretch (basic residues) spans 105 to 117 (TRKPKQPNRHRGN). The interval 105–147 (TRKPKQPNRHRGNRPPSVQGLKTQTTGHHKGVAVESGEHHAAA) is disordered.

The protein belongs to the drug/metabolite transporter (DMT) superfamily. Small multidrug resistance (SMR) (TC 2.A.7.1) family. MdtJ subfamily. In terms of assembly, forms a complex with MdtI.

Its subcellular location is the cell inner membrane. Its function is as follows. Catalyzes the excretion of spermidine. This chain is Spermidine export protein MdtJ, found in Yersinia pseudotuberculosis serotype IB (strain PB1/+).